A 620-amino-acid chain; its full sequence is Chaperone protein HscA homolog (620 aa).

The protein belongs to the heat shock protein 70 family.

Functionally, chaperone involved in the maturation of iron-sulfur cluster-containing proteins. Has a low intrinsic ATPase activity which is markedly stimulated by HscB. The protein is Chaperone protein HscA homolog of Shewanella sediminis (strain HAW-EB3).